The sequence spans 85 residues: Colicin E3 immunity protein (85 aa).

Belongs to the cloacin immunity protein family. Native colicin E3 is a 1:1 complex of A chain and protein B (Im3). Binds between the translocation and cytotoxic RNase domains of intact ColE3, blocking access to the 16S rRNA substrate. Forms a very tight 1:1 complex with the cytotoxic fragment (residues 456-551) of ColE3 (ceaC).

In terms of biological role, the cognate immunity protein for colicin E3 (ColE3), protects cells which harbor the plasmid ColE3 against the toxic action of ColE3. This protein inhibits the 16S RNA hydrolyzing activity of ColE3 by binding with very high affinity to the C-terminal catalytic domain of ColE3. The chain is Colicin E3 immunity protein from Escherichia coli.